Here is a 134-residue protein sequence, read N- to C-terminus: Profilin-3 (134 aa).

A disulfide bridge links Cys-13 with Cys-118. The Involved in PIP2 interaction signature appears at Ala-84 to Thr-100. Position 114 is a phosphothreonine (Thr-114).

This sequence belongs to the profilin family. In terms of assembly, occurs in many kinds of cells as a complex with monomeric actin in a 1:1 ratio. Post-translationally, phosphorylated by MAP kinases.

Its subcellular location is the cytoplasm. It is found in the cytoskeleton. Its function is as follows. Binds to actin and affects the structure of the cytoskeleton. At high concentrations, profilin prevents the polymerization of actin, whereas it enhances it at low concentrations. In Olea europaea (Common olive), this protein is Profilin-3.